Consider the following 117-residue polypeptide: Immunoglobulin kappa variable 1-5 (117 aa).

An N-terminal signal peptide occupies residues 1-22 (MDMRVPAQLLGLLLLWLPGAKC). A framework-1 region spans residues 23–45 (DIQMTQSPSTLSASVGDRVTITC). The Ig-like domain maps to 24-117 (IQMTQSPSTL…YYCQQYNSYS (94 aa)). The cysteines at positions 45 and 110 are disulfide-linked. A complementarity-determining-1 region spans residues 46–56 (RASQSISSWLA). A framework-2 region spans residues 57 to 71 (WYQQKPGKAPKLLIY). The tract at residues 72–78 (KASSLES) is complementarity-determining-2. Residues 79-110 (GVPSRFSGSGSGTEFTLTISSLQPDDFATYYC) are framework-3. The segment at 111–117 (QQYNSYS) is complementarity-determining-3.

Immunoglobulins are composed of two identical heavy chains and two identical light chains; disulfide-linked.

The protein resides in the secreted. Its subcellular location is the cell membrane. Functionally, v region of the variable domain of immunoglobulin light chains that participates in the antigen recognition. Immunoglobulins, also known as antibodies, are membrane-bound or secreted glycoproteins produced by B lymphocytes. In the recognition phase of humoral immunity, the membrane-bound immunoglobulins serve as receptors which, upon binding of a specific antigen, trigger the clonal expansion and differentiation of B lymphocytes into immunoglobulins-secreting plasma cells. Secreted immunoglobulins mediate the effector phase of humoral immunity, which results in the elimination of bound antigens. The antigen binding site is formed by the variable domain of one heavy chain, together with that of its associated light chain. Thus, each immunoglobulin has two antigen binding sites with remarkable affinity for a particular antigen. The variable domains are assembled by a process called V-(D)-J rearrangement and can then be subjected to somatic hypermutations which, after exposure to antigen and selection, allow affinity maturation for a particular antigen. The chain is Immunoglobulin kappa variable 1-5 from Homo sapiens (Human).